The primary structure comprises 238 residues: MQLPLLQPAIFIRRYKRFMADVELPNGEILTIHCANTGAMTGCAEKGDTVWYSDSKSTTRKYPCSWELTQLSNGSLVCINTHRSNQLVHEALQNKVIKELADYSEIYPEVKYGEENSRIDFLLKGEGLPDCYVEVKSITLVKNSIGMFPDAVTTRGQKHVRELLAMKKQGHRAVVLFAGLHNGFDCFKIAEHIDPEYDRLLKDAMRQGVEAYAYAGAFEKTQEIPTALSLTGKVPFIE.

Belongs to the SfsA family.

The polypeptide is Sugar fermentation stimulation protein homolog (Actinobacillus succinogenes (strain ATCC 55618 / DSM 22257 / CCUG 43843 / 130Z)).